A 260-amino-acid chain; its full sequence is Thymidylate synthase (260 aa).

DUMP is bound at residue arginine 21. Histidine 51 is a binding site for (6R)-5,10-methylene-5,6,7,8-tetrahydrofolate. 122-123 is a binding site for dUMP; the sequence is RR. Residue cysteine 142 is the Nucleophile of the active site. DUMP-binding positions include 162-165, asparagine 173, and 203-205; these read RSAD and HLY. Aspartate 165 serves as a coordination point for (6R)-5,10-methylene-5,6,7,8-tetrahydrofolate. Alanine 259 lines the (6R)-5,10-methylene-5,6,7,8-tetrahydrofolate pocket.

Belongs to the thymidylate synthase family. Bacterial-type ThyA subfamily. Homodimer.

It is found in the cytoplasm. The enzyme catalyses dUMP + (6R)-5,10-methylene-5,6,7,8-tetrahydrofolate = 7,8-dihydrofolate + dTMP. It functions in the pathway pyrimidine metabolism; dTTP biosynthesis. Catalyzes the reductive methylation of 2'-deoxyuridine-5'-monophosphate (dUMP) to 2'-deoxythymidine-5'-monophosphate (dTMP) while utilizing 5,10-methylenetetrahydrofolate (mTHF) as the methyl donor and reductant in the reaction, yielding dihydrofolate (DHF) as a by-product. This enzymatic reaction provides an intracellular de novo source of dTMP, an essential precursor for DNA biosynthesis. The sequence is that of Thymidylate synthase from Methylococcus capsulatus (strain ATCC 33009 / NCIMB 11132 / Bath).